The primary structure comprises 243 residues: Pyridoxine 5'-phosphate synthase (243 aa).

N9 is a binding site for 3-amino-2-oxopropyl phosphate. Residue 11 to 12 (DH) participates in 1-deoxy-D-xylulose 5-phosphate binding. 3-amino-2-oxopropyl phosphate is bound at residue R20. The Proton acceptor role is filled by H45. 1-deoxy-D-xylulose 5-phosphate contacts are provided by R47 and H52. The active-site Proton acceptor is E72. A 1-deoxy-D-xylulose 5-phosphate-binding site is contributed by T102. The Proton donor role is filled by H193. Residues G194 and 215–216 (GH) contribute to the 3-amino-2-oxopropyl phosphate site.

Belongs to the PNP synthase family. Homooctamer; tetramer of dimers.

It is found in the cytoplasm. It catalyses the reaction 3-amino-2-oxopropyl phosphate + 1-deoxy-D-xylulose 5-phosphate = pyridoxine 5'-phosphate + phosphate + 2 H2O + H(+). Its pathway is cofactor biosynthesis; pyridoxine 5'-phosphate biosynthesis; pyridoxine 5'-phosphate from D-erythrose 4-phosphate: step 5/5. Its function is as follows. Catalyzes the complicated ring closure reaction between the two acyclic compounds 1-deoxy-D-xylulose-5-phosphate (DXP) and 3-amino-2-oxopropyl phosphate (1-amino-acetone-3-phosphate or AAP) to form pyridoxine 5'-phosphate (PNP) and inorganic phosphate. This Photorhabdus laumondii subsp. laumondii (strain DSM 15139 / CIP 105565 / TT01) (Photorhabdus luminescens subsp. laumondii) protein is Pyridoxine 5'-phosphate synthase.